The sequence spans 231 residues: Large ribosomal subunit protein uL1 (231 aa).

The protein belongs to the universal ribosomal protein uL1 family. As to quaternary structure, part of the 50S ribosomal subunit.

Its function is as follows. Binds directly to 23S rRNA. The L1 stalk is quite mobile in the ribosome, and is involved in E site tRNA release. Functionally, protein L1 is also a translational repressor protein, it controls the translation of the L11 operon by binding to its mRNA. The sequence is that of Large ribosomal subunit protein uL1 from Mesomycoplasma hyopneumoniae (strain 232) (Mycoplasma hyopneumoniae).